A 476-amino-acid chain; its full sequence is Vitamin D-binding protein (476 aa).

The N-terminal stretch at 1-16 is a signal peptide; sequence MKRVLVLLLALAFGHA. Albumin domains follow at residues 17–208, 209–394, and 395–476; these read LERG…QMKH, LSLL…LLKR, and QLTS…TLQS. Cystine bridges form between C29–C75, C74–C83, C96–C112, C111–C122, C145–C190, C189–C198, C220–C266, C265–C273, C286–C300, C299–C311, C335–C376, C375–C384, C407–C453, and C452–C462. An N-linked (GlcNAc...) asparagine glycan is attached at N288. The residue at position 434 (S434) is a Phosphoserine.

Belongs to the ALB/AFP/VDB family. As to quaternary structure, associates with membrane-bound immunoglobulin on the surface of B-lymphocytes and with IgG Fc receptor on the membranes of T-lymphocytes. Interacts with LRP2; the interaction is required for renal uptake of GC in complex with 25-hydroxyvitamin D3.

It localises to the secreted. In terms of biological role, involved in vitamin D transport and storage, scavenging of extracellular G-actin, enhancement of the chemotactic activity of C5 alpha for neutrophils in inflammation and macrophage activation. The polypeptide is Vitamin D-binding protein (Gc) (Mus musculus (Mouse)).